Consider the following 700-residue polypeptide: Acetyl-coenzyme A carboxylase carboxyl transferase subunit beta, chloroplastic (700 aa).

Zn(2+)-binding residues include Cys-34, Cys-37, Cys-53, and Cys-56. The C4-type zinc-finger motif lies at 34–56 (CENCETLIYKKSLLEQKGVCAEC). In terms of domain architecture, CoA carboxyltransferase N-terminal spans 445-700 (KKGRDTKDTE…ETIEIYMYGD (256 aa)).

This sequence belongs to the AccD/PCCB family. In terms of assembly, acetyl-CoA carboxylase is a heterohexamer composed of biotin carboxyl carrier protein, biotin carboxylase and 2 subunits each of ACCase subunit alpha and ACCase plastid-coded subunit beta (accD). Zn(2+) serves as cofactor.

The protein localises to the plastid. It is found in the chloroplast stroma. The enzyme catalyses N(6)-carboxybiotinyl-L-lysyl-[protein] + acetyl-CoA = N(6)-biotinyl-L-lysyl-[protein] + malonyl-CoA. Its pathway is lipid metabolism; malonyl-CoA biosynthesis; malonyl-CoA from acetyl-CoA: step 1/1. Its function is as follows. Component of the acetyl coenzyme A carboxylase (ACC) complex. Biotin carboxylase (BC) catalyzes the carboxylation of biotin on its carrier protein (BCCP) and then the CO(2) group is transferred by the transcarboxylase to acetyl-CoA to form malonyl-CoA. This Cryptomeria japonica (Japanese cedar) protein is Acetyl-coenzyme A carboxylase carboxyl transferase subunit beta, chloroplastic.